The following is a 105-amino-acid chain: Signal peptidase complex subunit 1 (105 aa).

At 1–32 (MDGMIAMLPAPLQKLSSHIDFQGQKVAERTYQ) the chain is on the cytoplasmic side. Residues 33–53 (VILTIAGIIGFLVGFWTQQLS) traverse the membrane as a helical segment. Topologically, residues 54–56 (YAM) are lumenal. The chain crosses the membrane as a helical span at residues 57–77 (FTVLGASAFTALIILPPWPFL). At 78-105 (FRKNPIVWHTPAEPQESGDKKKETKKTK) the chain is on the cytoplasmic side.

The protein belongs to the SPCS1 family. As to quaternary structure, component of the signal peptidase complex (SPC) composed of a catalytic subunit sec-11 and three accessory subunits spcs-1, spcs-2 and spcs-3. The complex induces a local thinning of the ER membrane which is used to measure the length of the signal peptide (SP) h-region of protein substrates. This ensures the selectivity of the complex towards h-regions shorter than 18-20 amino acids.

It is found in the endoplasmic reticulum membrane. In terms of biological role, component of the signal peptidase complex (SPC) which catalyzes the cleavage of N-terminal signal sequences from nascent proteins as they are translocated into the lumen of the endoplasmic reticulum. Dispensable for SPC enzymatic activity. The sequence is that of Signal peptidase complex subunit 1 from Caenorhabditis elegans.